A 442-amino-acid chain; its full sequence is Serine protease AprX (442 aa).

The Peptidase S8 domain occupies 122–439 (KALLDTATEA…AGAVNAENSV (318 aa)). Residues Asp-155 and His-187 each act as charge relay system in the active site. Residues 318-337 (DNNTASSDDDTVASFSSRGP) form a disordered region. Ser-384 (charge relay system) is an active-site residue. Residues 423–442 (EDPNIYGAGAVNAENSVPGQ) form a disordered region.

Belongs to the peptidase S8 family.

Its subcellular location is the cytoplasm. Is completely inhibited by phenylmethanesulphonylfluoride (PMSF) in vitro. In terms of biological role, displays serine protease activity. Seems to have a broad substrate specificity. This chain is Serine protease AprX (aprX), found in Bacillus subtilis (strain 168).